A 219-amino-acid polypeptide reads, in one-letter code: PKHD-type hydroxylase Mmar10_1675 (219 aa).

The Fe2OG dioxygenase domain occupies 77–171; that stretch reads TLSRILVSRY…RVAVVGWVRS (95 aa). His-95, Asp-97, and His-152 together coordinate Fe cation. Position 162 (Arg-162) interacts with 2-oxoglutarate.

Fe(2+) serves as cofactor. It depends on L-ascorbate as a cofactor.

The sequence is that of PKHD-type hydroxylase Mmar10_1675 from Maricaulis maris (strain MCS10) (Caulobacter maris).